The chain runs to 369 residues: Saccharopine dehydrogenase [NAD(+), L-lysine-forming] (369 aa).

Arg-19 and Lys-78 together coordinate L-saccharopine. The Proton acceptor role is filled by Lys-78. The Proton donor role is filled by His-96. L-saccharopine is bound at residue Gln-101. Arg-130 contributes to the NAD(+) binding site. Residues Arg-131 and Phe-135 each coordinate L-saccharopine. Residues 203-204 (GR), Asp-227, Thr-231, Tyr-251, and Val-278 each bind NAD(+). Cys-205 and Cys-249 are oxidised to a cystine. 279 to 281 (SAD) contacts L-saccharopine. 318–321 (IDHL) contributes to the NAD(+) binding site.

This sequence belongs to the AlaDH/PNT family. As to quaternary structure, monomer.

The catalysed reaction is L-saccharopine + NAD(+) + H2O = L-lysine + 2-oxoglutarate + NADH + H(+). It participates in amino-acid biosynthesis; L-lysine biosynthesis via AAA pathway; L-lysine from L-alpha-aminoadipate (fungal route): step 3/3. Its function is as follows. Catalyzes the NAD(+)-dependent cleavage of saccharopine to L-lysine and 2-oxoglutarate, the final step in the alpha-aminoadipate (AAA) pathway for lysin biosynthesis. The sequence is that of Saccharopine dehydrogenase [NAD(+), L-lysine-forming] from Yarrowia lipolytica (strain CLIB 122 / E 150) (Yeast).